The following is a 261-amino-acid chain: Phosphatidylglycerol--prolipoprotein diacylglyceryl transferase (261 aa).

The next 7 helical transmembrane spans lie at 19 to 39 (VHWYGLMYLVGFAMAWGLALY), 56 to 76 (LIFYGALGLIIGGRLGYMLFY), 92 to 112 (WRGGMSFHGGLIGVIVTTWIF), 126 to 146 (FVVPLVPLGLAAGRIGNFING), 173 to 193 (QLYEFLLEGVLLFIVIWWFSA), 199 to 219 (FAVSSLFLLCYGLFRFTAEFF), and 227 to 247 (GFVAFGWLTRGQELSLPMIII). Arg139 lines the a 1,2-diacyl-sn-glycero-3-phospho-(1'-sn-glycerol) pocket.

This sequence belongs to the Lgt family.

It is found in the cell inner membrane. It catalyses the reaction L-cysteinyl-[prolipoprotein] + a 1,2-diacyl-sn-glycero-3-phospho-(1'-sn-glycerol) = an S-1,2-diacyl-sn-glyceryl-L-cysteinyl-[prolipoprotein] + sn-glycerol 1-phosphate + H(+). It functions in the pathway protein modification; lipoprotein biosynthesis (diacylglyceryl transfer). Its function is as follows. Catalyzes the transfer of the diacylglyceryl group from phosphatidylglycerol to the sulfhydryl group of the N-terminal cysteine of a prolipoprotein, the first step in the formation of mature lipoproteins. The chain is Phosphatidylglycerol--prolipoprotein diacylglyceryl transferase from Coxiella burnetii (strain CbuK_Q154) (Coxiella burnetii (strain Q154)).